Consider the following 357-residue polypeptide: UPF0283 membrane protein BMEI0952 (357 aa).

The segment at 1 to 36 (MSDKTPRKPTAFRLEQPARVSAASEQEEPRRPRAVK) is disordered. A compositionally biased stretch (basic and acidic residues) spans 27–36 (EEPRRPRAVK). 2 helical membrane-spanning segments follow: residues 78 to 98 (ILFG…TEDL) and 109 to 129 (LGWT…AIIL).

The protein belongs to the UPF0283 family.

Its subcellular location is the cell inner membrane. The polypeptide is UPF0283 membrane protein BMEI0952 (Brucella melitensis biotype 1 (strain ATCC 23456 / CCUG 17765 / NCTC 10094 / 16M)).